The sequence spans 101 residues: MQSDKDKTFDSWLVKAIGRVQGVGYRDACIRYARAQDITGWVRNRVDGSVELMLQGSKEQLADMCRWLRDGIPAAHVEKLEVSKVPPPSPRLNRFDRLPNL.

In terms of domain architecture, Acylphosphatase-like spans 11 to 99 (SWLVKAIGRV…PRLNRFDRLP (89 aa)). Residues Arg-26 and Asn-44 contribute to the active site.

Belongs to the acylphosphatase family.

The catalysed reaction is an acyl phosphate + H2O = a carboxylate + phosphate + H(+). The sequence is that of Acylphosphatase (acyP) from Polaromonas naphthalenivorans (strain CJ2).